Reading from the N-terminus, the 201-residue chain is Peptidyl-tRNA hydrolase (201 aa).

Y17 contacts tRNA. The active-site Proton acceptor is the H22. TRNA contacts are provided by F76, N78, and N124.

Belongs to the PTH family. In terms of assembly, monomer.

It is found in the cytoplasm. The catalysed reaction is an N-acyl-L-alpha-aminoacyl-tRNA + H2O = an N-acyl-L-amino acid + a tRNA + H(+). Hydrolyzes ribosome-free peptidyl-tRNAs (with 1 or more amino acids incorporated), which drop off the ribosome during protein synthesis, or as a result of ribosome stalling. In terms of biological role, catalyzes the release of premature peptidyl moieties from peptidyl-tRNA molecules trapped in stalled 50S ribosomal subunits, and thus maintains levels of free tRNAs and 50S ribosomes. The sequence is that of Peptidyl-tRNA hydrolase from Oleidesulfovibrio alaskensis (strain ATCC BAA-1058 / DSM 17464 / G20) (Desulfovibrio alaskensis).